The sequence spans 375 residues: Queuine tRNA-ribosyltransferase (375 aa).

Asp93 functions as the Proton acceptor in the catalytic mechanism. Substrate is bound by residues 93-97 (DSGGF), Asp147, Gln191, and Gly218. The tract at residues 249-255 (GVGTPLD) is RNA binding. Asp268 (nucleophile) is an active-site residue. Residues 273-277 (TRNAR) are RNA binding; important for wobble base 34 recognition. Zn(2+)-binding residues include Cys306, Cys308, Cys311, and His337.

It belongs to the queuine tRNA-ribosyltransferase family. In terms of assembly, homodimer. Within each dimer, one monomer is responsible for RNA recognition and catalysis, while the other monomer binds to the replacement base PreQ1. The cofactor is Zn(2+).

The catalysed reaction is 7-aminomethyl-7-carbaguanine + guanosine(34) in tRNA = 7-aminomethyl-7-carbaguanosine(34) in tRNA + guanine. The protein operates within tRNA modification; tRNA-queuosine biosynthesis. In terms of biological role, catalyzes the base-exchange of a guanine (G) residue with the queuine precursor 7-aminomethyl-7-deazaguanine (PreQ1) at position 34 (anticodon wobble position) in tRNAs with GU(N) anticodons (tRNA-Asp, -Asn, -His and -Tyr). Catalysis occurs through a double-displacement mechanism. The nucleophile active site attacks the C1' of nucleotide 34 to detach the guanine base from the RNA, forming a covalent enzyme-RNA intermediate. The proton acceptor active site deprotonates the incoming PreQ1, allowing a nucleophilic attack on the C1' of the ribose to form the product. After dissociation, two additional enzymatic reactions on the tRNA convert PreQ1 to queuine (Q), resulting in the hypermodified nucleoside queuosine (7-(((4,5-cis-dihydroxy-2-cyclopenten-1-yl)amino)methyl)-7-deazaguanosine). This is Queuine tRNA-ribosyltransferase from Nitratidesulfovibrio vulgaris (strain DP4) (Desulfovibrio vulgaris).